Here is a 184-residue protein sequence, read N- to C-terminus: Trichothecene 15-O-acetyltransferase SAT16 (184 aa).

His154 contacts substrate.

It belongs to the trichothecene O-acetyltransferase family.

It functions in the pathway mycotoxin biosynthesis. In terms of biological role, trichothecene 15-O-acetyltransferase; part of the satratoxin SC2 cluster involved in the biosynthesis of satratoxins, trichothecene mycotoxins that are associated with human food poisonings. Satratoxins are suggested to be made by products of multiple gene clusters (SC1, SC2 and SC3) that encode 21 proteins in all, including polyketide synthases, acetyltransferases, and other enzymes expected to modify the trichothecene skeleton. SC1 encodes 10 proteins, SAT1 to SAT10. The largest are SAT8, which encodes a putative polyketide synthase (PKS) with a conventional non-reducing architecture, and SAT10, a putative protein containing four ankyrin repeats and thus may be involved in protein scaffolding. The putative short-chain reductase SAT3 may assist the PKS in some capacity. SAT6 contains a secretory lipase domain and acts probably as a trichothecene esterase. SAT5 encodes a putative acetyltransferase, and so, with SAT6, may affect endogenous protection from toxicity. The probable transcription factor SAT9 may regulate the expression of the SC1 cluster. SC2 encodes proteins SAT11 to SAT16, the largest of which encodes the putative reducing PKS SAT13. SAT11 is a cytochrome P450 monooxygenase, while SAT14 and SAT16 are probable acetyltransferases. The SC2 cluster may be regulated by the transcription factor SAT15. SC3 is a small cluster that encodes 5 proteins, SAT17 to SAT21. SAT21 is a putative MFS-type transporter which may have a role in exporting secondary metabolites. The four other proteins putatively encoded in SC3 include the taurine hydroxylase-like protein SAT17, the O-methyltransferase SAT18, the acetyltransferase SAT19, and the Cys6-type zinc finger SAT20, the latter being probably involved in regulation of SC3 expression. This Stachybotrys chartarum (strain CBS 109288 / IBT 7711) (Toxic black mold) protein is Trichothecene 15-O-acetyltransferase SAT16.